Here is a 460-residue protein sequence, read N- to C-terminus: tRNA modification GTPase MnmE (460 aa).

(6S)-5-formyl-5,6,7,8-tetrahydrofolate is bound by residues R29, E91, and K132. The region spanning 227 to 383 is the TrmE-type G domain; sequence GISIALIGKT…LIDTIIKKCG (157 aa). A K(+)-binding site is contributed by N237. GTP contacts are provided by residues 237–242, 256–262, and 281–284; these read NVGKSS, TNIPGTT, and DTAG. S241 provides a ligand contact to Mg(2+). Residues T256, I258, and T261 each contribute to the K(+) site. Position 262 (T262) interacts with Mg(2+). K460 contacts (6S)-5-formyl-5,6,7,8-tetrahydrofolate.

It belongs to the TRAFAC class TrmE-Era-EngA-EngB-Septin-like GTPase superfamily. TrmE GTPase family. In terms of assembly, homodimer. Heterotetramer of two MnmE and two MnmG subunits. The cofactor is K(+).

The protein resides in the cytoplasm. Functionally, exhibits a very high intrinsic GTPase hydrolysis rate. Involved in the addition of a carboxymethylaminomethyl (cmnm) group at the wobble position (U34) of certain tRNAs, forming tRNA-cmnm(5)s(2)U34. This Prochlorococcus marinus (strain MIT 9312) protein is tRNA modification GTPase MnmE.